A 271-amino-acid polypeptide reads, in one-letter code: Calretinin (271 aa).

EF-hand domains lie at 16–51, 63–98, 107–142, 151–186, 195–230, and 235–270; these read LTAS…LEKA, NFGE…EENF, GSSA…LLKK, KLQE…QENF, LTSE…LYEK, and MNIQ…SEPP. Residues aspartate 29, aspartate 31, asparagine 33, tyrosine 35, glutamate 40, aspartate 76, asparagine 78, aspartate 80, lysine 82, glutamate 87, aspartate 120, aspartate 122, serine 124, tyrosine 126, glutamate 131, aspartate 164, asparagine 166, aspartate 168, lysine 170, glutamate 175, aspartate 208, aspartate 210, serine 212, tyrosine 214, and glutamate 219 each contribute to the Ca(2+) site. Tyrosine 214 bears the Phosphotyrosine mark.

Belongs to the calbindin family.

It localises to the synapse. The protein localises to the cell projection. The protein resides in the dendrite. Its function is as follows. Calcium-binding protein involved in calcium homeostasis and signal transduction. It plays a critical role in buffering intracellular calcium levels and modulating calcium-dependent signaling pathways. Predominantly expressed in specific neuronal populations, influences synaptic plasticity and neuronal excitability, contributing to learning and memory. During embryonic development, it facilitates neuronal differentiation and maturation. The protein is Calretinin (Calb2) of Rattus norvegicus (Rat).